The chain runs to 483 residues: Sphingomyelin phosphodiesterase 5 (483 aa).

Residues 1 to 20 (MSLPDISRRRSPVPQEDWPL) form a disordered region. A helical membrane pass occupies residues 80 to 100 (VLLPLVVVGLPLALVGLALWL). Position 209 (Glu209) interacts with Mg(2+). The active-site Proton acceptor is the His471.

Belongs to the neutral sphingomyelinase family. Requires Mg(2+) as cofactor. It depends on Mn(2+) as a cofactor. Highly expressed in testis, pancreas, epididymis, and brain.

The protein resides in the mitochondrion inner membrane. Its subcellular location is the endoplasmic reticulum membrane. The enzyme catalyses a sphingomyelin + H2O = phosphocholine + an N-acylsphing-4-enine + H(+). The catalysed reaction is N-(hexadecanoyl)-sphing-4-enine-1-phosphocholine + H2O = N-hexadecanoylsphing-4-enine + phosphocholine + H(+). The protein operates within lipid metabolism; sphingolipid metabolism. Activated by anionic phospholipids, specially cardiolipin and phosphatidylserine. Its function is as follows. Catalyzes the hydrolysis of membrane sphingomyelin to form phosphorylcholine and ceramide. The chain is Sphingomyelin phosphodiesterase 5 from Mus musculus (Mouse).